The sequence spans 526 residues: GMP synthase [glutamine-hydrolyzing] (526 aa).

The Glutamine amidotransferase type-1 domain occupies 9–208; that stretch reads RILILDFGSQ…VKDICGCECL (200 aa). Cys-86 serves as the catalytic Nucleophile. Catalysis depends on residues His-182 and Glu-184. The region spanning 209–401 is the GMPS ATP-PPase domain; the sequence is WTPATIIDDA…LGLPYDMLYR (193 aa). 236–242 is a binding site for ATP; sequence SGGVDSS.

As to quaternary structure, homodimer.

The catalysed reaction is XMP + L-glutamine + ATP + H2O = GMP + L-glutamate + AMP + diphosphate + 2 H(+). The protein operates within purine metabolism; GMP biosynthesis; GMP from XMP (L-Gln route): step 1/1. Functionally, catalyzes the synthesis of GMP from XMP. This Aeromonas salmonicida (strain A449) protein is GMP synthase [glutamine-hydrolyzing].